Consider the following 347-residue polypeptide: MLTNPSQVIIRNQDSLSQHKVLVLNHEADLLPKALLDVAASVDALALDYHHYLHLAPHANSKLRCYFGHDLPHQDPLEREKYDTVIVYFPKAKPLAPYLFNLAANHLVPNGQLLVVGENKGGIKSLVKLLPEYFATGMKLDNARHCLLFGSSLEGSAPAMKLSDWVSQYQLTTPQGEISICNLVGVFSEKRLDLGTELLLSHLPTLSGRVLDFGCGAGVIAAALLKAQPSLSLECVDINAMALASCELTLAANGMTAKVYPSDGLAQTTGKFNGIISNPPFHDGLASTTSIAQNFVTDSAKQLQHNGIWQIVANRHLPYSDIIAAEFGQLKVVADNNKYKLYYFQHK.

This sequence belongs to the methyltransferase superfamily. RsmC family. In terms of assembly, monomer.

The protein resides in the cytoplasm. It carries out the reaction guanosine(1207) in 16S rRNA + S-adenosyl-L-methionine = N(2)-methylguanosine(1207) in 16S rRNA + S-adenosyl-L-homocysteine + H(+). In terms of biological role, specifically methylates the guanine in position 1207 of 16S rRNA in the 30S particle. The chain is Ribosomal RNA small subunit methyltransferase C from Shewanella baltica (strain OS185).